The primary structure comprises 149 residues: Putative pre-16S rRNA nuclease (149 aa).

Belongs to the YqgF nuclease family.

Its subcellular location is the cytoplasm. Could be a nuclease involved in processing of the 5'-end of pre-16S rRNA. This chain is Putative pre-16S rRNA nuclease, found in Burkholderia multivorans (strain ATCC 17616 / 249).